Consider the following 252-residue polypeptide: Chitooligosaccharide deacetylase (252 aa).

Mg(2+)-binding residues include histidine 61 and histidine 125.

The protein belongs to the YdjC deacetylase family. ChbG subfamily. Homodimer. Requires Mg(2+) as cofactor.

The protein resides in the cytoplasm. The catalysed reaction is N,N'-diacetylchitobiose + H2O = N-acetyl-beta-D-glucosaminyl-(1-&gt;4)-D-glucosamine + acetate. It catalyses the reaction diacetylchitobiose-6'-phosphate + H2O = N'-monoacetylchitobiose-6'-phosphate + acetate. Its pathway is glycan degradation; chitin degradation. In terms of biological role, involved in the degradation of chitin. ChbG is essential for growth on the acetylated chitooligosaccharides chitobiose and chitotriose but is dispensable for growth on cellobiose and chitosan dimer, the deacetylated form of chitobiose. Deacetylation of chitobiose-6-P and chitotriose-6-P is necessary for both the activation of the chb promoter by the regulatory protein ChbR and the hydrolysis of phosphorylated beta-glucosides by the phospho-beta-glucosidase ChbF. Catalyzes the removal of only one acetyl group from chitobiose-6-P to yield monoacetylchitobiose-6-P, the inducer of ChbR and the substrate of ChbF. The polypeptide is Chitooligosaccharide deacetylase (Salmonella enteritidis PT4 (strain P125109)).